The following is a 279-amino-acid chain: MKTKADFFRMKQADEPIVMVTAYDFPSAKLVEQAGVDMILVGDSLGMVVLGYDSTIPVTVDDMIHHTKAVRRGAPNTFIVTDMPFMSYHASKEEALQNARRIMQQSGANAVKVEGADEVVETIAALTKAGVPVVAHLGLTPQSVGVLGGYKVQGKDAESAKKLLNDAKQCEQAGAIALVLECVPKQLGAAVARELTIPVIGIGAGAEVDGQVLVYHDLLGYGVNRVPKFVKQYAAIQETIVEALANYIADVKLRQFPEPAHTFTMKEEEWVALYGGKQS.

Mg(2+)-binding residues include D43 and D82. 3-methyl-2-oxobutanoate contacts are provided by residues 43–44 (DS), D82, and K112. E114 contacts Mg(2+). The active-site Proton acceptor is the E181.

Belongs to the PanB family. As to quaternary structure, homodecamer; pentamer of dimers. Mg(2+) is required as a cofactor.

The protein localises to the cytoplasm. The enzyme catalyses 3-methyl-2-oxobutanoate + (6R)-5,10-methylene-5,6,7,8-tetrahydrofolate + H2O = 2-dehydropantoate + (6S)-5,6,7,8-tetrahydrofolate. The protein operates within cofactor biosynthesis; (R)-pantothenate biosynthesis; (R)-pantoate from 3-methyl-2-oxobutanoate: step 1/2. Catalyzes the reversible reaction in which hydroxymethyl group from 5,10-methylenetetrahydrofolate is transferred onto alpha-ketoisovalerate to form ketopantoate. This Geobacillus thermodenitrificans (strain NG80-2) protein is 3-methyl-2-oxobutanoate hydroxymethyltransferase.